A 478-amino-acid chain; its full sequence is UBP1-associated protein 2A (478 aa).

Residues 1-99 (MTKKRKLEGE…NQEDDDDEPI (99 aa)) form a disordered region. Over residues 41 to 75 (GDVEEVEYEEVEEEQEEEVEDDDDEDDGDENEDQT) the composition is skewed to acidic residues. 2 RRM domains span residues 140–217 (RKIF…LASK) and 245–328 (KKIY…KPGK). Disordered regions lie at residues 321 to 359 (IDGPKPGKQQQHHHNPHAYNNPRYQRNDNNGYGPPGGHG) and 442 to 478 (GTQPGLQGGYQTPQPGQGGTSRGQHGVGPYGTPYMGH). Over residues 442-456 (GTQPGLQGGYQTPQP) the composition is skewed to low complexity. Residues 457–470 (GQGGTSRGQHGVGP) show a composition bias toward gly residues.

Interacts with UBA1A, UBA2A, UBP1A, UBP1B, UBP1C and SRK2E. Expressed in young leaves, flowers and embryos.

It localises to the nucleus. In terms of biological role, heterogeneous nuclear ribonucleoprotein (hnRNP)-like protein that acts as a component of a complex regulating the turnover of mRNAs in the nucleus. Binds with high affinity to RNA molecules that contain U-rich sequences in 3'-UTRs. May function in complex with UBP1 and contribute to the stabilization of mRNAs in the nucleus. However, unlike UBP1, UBA2A does not stimulate pre-mRNA splicing. The polypeptide is UBP1-associated protein 2A (UBA2A) (Arabidopsis thaliana (Mouse-ear cress)).